Reading from the N-terminus, the 124-residue chain is Putative C(50) carotenoid beta-cyclase subunit A (124 aa).

The next 3 membrane-spanning stretches (helical) occupy residues 1–21, 34–54, and 78–98; these read MIGL…LVID, AAAL…VLGV, and FEEV…AAGV.

It belongs to the lycopene beta-cyclase family. In terms of assembly, may form a complex with LbtBC.

It localises to the cell membrane. Its pathway is carotenoid biosynthesis. Involved in the biosynthesis of C(50) beta-cyclic carotenoids. May have C(50) carotenoid beta-cyclase activity and produce the C(50) beta-cyclic carotenoid C.p.450 from the C(50) carotenoid dihydrobisanhydrobacterioruberin (DH-BABR). This is Putative C(50) carotenoid beta-cyclase subunit A from Dietzia sp. (strain CQ4).